The chain runs to 433 residues: ATP-dependent protease ATPase subunit HslU (433 aa).

ATP is bound by residues Val-18, 60-65, Asp-246, Glu-311, and Arg-383; that span reads GVGKTE.

This sequence belongs to the ClpX chaperone family. HslU subfamily. A double ring-shaped homohexamer of HslV is capped on each side by a ring-shaped HslU homohexamer. The assembly of the HslU/HslV complex is dependent on binding of ATP.

The protein resides in the cytoplasm. Its function is as follows. ATPase subunit of a proteasome-like degradation complex; this subunit has chaperone activity. The binding of ATP and its subsequent hydrolysis by HslU are essential for unfolding of protein substrates subsequently hydrolyzed by HslV. HslU recognizes the N-terminal part of its protein substrates and unfolds these before they are guided to HslV for hydrolysis. The protein is ATP-dependent protease ATPase subunit HslU of Nitrobacter winogradskyi (strain ATCC 25391 / DSM 10237 / CIP 104748 / NCIMB 11846 / Nb-255).